The following is a 594-amino-acid chain: UvrABC system protein C (594 aa).

In terms of domain architecture, GIY-YIG spans 13-99 (HSSGVYQYFD…IKQLKPKYNI (87 aa)). A UVR domain is found at 205-240 (DKLIKELELKMERLSNNLRFEEALIYRDRIAKIQKI).

Belongs to the UvrC family. As to quaternary structure, interacts with UvrB in an incision complex.

Its subcellular location is the cytoplasm. Functionally, the UvrABC repair system catalyzes the recognition and processing of DNA lesions. UvrC both incises the 5' and 3' sides of the lesion. The N-terminal half is responsible for the 3' incision and the C-terminal half is responsible for the 5' incision. This chain is UvrABC system protein C, found in Helicobacter pylori (strain Shi470).